Reading from the N-terminus, the 100-residue chain is Urease subunit gamma (100 aa).

It belongs to the urease gamma subunit family. In terms of assembly, heterotrimer of UreA (gamma), UreB (beta) and UreC (alpha) subunits. Three heterotrimers associate to form the active enzyme.

Its subcellular location is the cytoplasm. It catalyses the reaction urea + 2 H2O + H(+) = hydrogencarbonate + 2 NH4(+). Its pathway is nitrogen metabolism; urea degradation; CO(2) and NH(3) from urea (urease route): step 1/1. This chain is Urease subunit gamma, found in Bordetella pertussis (strain Tohama I / ATCC BAA-589 / NCTC 13251).